The primary structure comprises 688 residues: Elongation factor G (688 aa).

Residues 8-282 (EKTRNIGIMA…AIIDYLPSPM (275 aa)) enclose the tr-type G domain. GTP-binding positions include 17–24 (AHIDAGKT), 81–85 (DTPGH), and 135–138 (NKMD).

Belongs to the TRAFAC class translation factor GTPase superfamily. Classic translation factor GTPase family. EF-G/EF-2 subfamily.

The protein resides in the cytoplasm. In terms of biological role, catalyzes the GTP-dependent ribosomal translocation step during translation elongation. During this step, the ribosome changes from the pre-translocational (PRE) to the post-translocational (POST) state as the newly formed A-site-bound peptidyl-tRNA and P-site-bound deacylated tRNA move to the P and E sites, respectively. Catalyzes the coordinated movement of the two tRNA molecules, the mRNA and conformational changes in the ribosome. The protein is Elongation factor G (fusA) of Apple proliferation phytoplasma.